A 294-amino-acid polypeptide reads, in one-letter code: Bifunctional protein FolD (294 aa).

Residues Gly-171–Ser-173, Ser-196, and Ile-237 each bind NADP(+).

The protein belongs to the tetrahydrofolate dehydrogenase/cyclohydrolase family. As to quaternary structure, homodimer.

The enzyme catalyses (6R)-5,10-methylene-5,6,7,8-tetrahydrofolate + NADP(+) = (6R)-5,10-methenyltetrahydrofolate + NADPH. It carries out the reaction (6R)-5,10-methenyltetrahydrofolate + H2O = (6R)-10-formyltetrahydrofolate + H(+). It participates in one-carbon metabolism; tetrahydrofolate interconversion. In terms of biological role, catalyzes the oxidation of 5,10-methylenetetrahydrofolate to 5,10-methenyltetrahydrofolate and then the hydrolysis of 5,10-methenyltetrahydrofolate to 10-formyltetrahydrofolate. This is Bifunctional protein FolD from Synechocystis sp. (strain ATCC 27184 / PCC 6803 / Kazusa).